A 560-amino-acid polypeptide reads, in one-letter code: Tudor and KH domain-containing protein (560 aa).

2 KH domains span residues 52–115 (DIEI…KAAI) and 124–190 (PVFE…KHLI). Glycyl lysine isopeptide (Lys-Gly) (interchain with G-Cter in ubiquitin) cross-links involve residues lysine 65, lysine 76, lysine 110, lysine 112, lysine 152, lysine 175, lysine 181, lysine 187, and lysine 193. Positions 211 to 230 (RVPRKQPISVRREEVTEPGG) are disordered. Glycyl lysine isopeptide (Lys-Gly) (interchain with G-Cter in ubiquitin) cross-links involve residues lysine 256 and lysine 267. The segment at 268-291 (EGSWEKPNDDSFQNSGAQSSPETS) is disordered. Residues 277–290 (DSFQNSGAQSSPET) are compositionally biased toward polar residues. Phosphoserine is present on serine 278. The Tudor domain occupies 353-412 (TVHVGDIVAAPLSTNGSWYRARVLGTLENGNLDLYFVDFGDNGDCALKDLRALRSDFLSL). Residues lysine 479, lysine 510, and lysine 529 each participate in a glycyl lysine isopeptide (Lys-Gly) (interchain with G-Cter in ubiquitin) cross-link.

It belongs to the Tdrkh family. Interacts with (symmetrically methylated) PIWIL1, PIWIL2 and PIWIL4. Post-translationally, ubiquitinated by PRKN during mitophagy, leading to its degradation and enhancement of mitophagy. Deubiquitinated by USP30. In terms of tissue distribution, highly expressed in testis, present at lower level in brain. Weakly or not expressed in other tissues (at protein level).

The protein localises to the cytoplasm. Its subcellular location is the mitochondrion. Participates in the primary piRNA biogenesis pathway and is required during spermatogenesis to repress transposable elements and prevent their mobilization, which is essential for the germline integrity. The piRNA metabolic process mediates the repression of transposable elements during meiosis by forming complexes composed of piRNAs and Piwi proteins and govern the methylation and subsequent repression of transposons. Required for the final steps of primary piRNA biogenesis by participating in the processing of 31-37 nt intermediates into mature piRNAs. May act in pi-bodies and piP-bodies by transferring piRNA precursors or intermediates to or between these granules. The polypeptide is Tudor and KH domain-containing protein (Tdrkh) (Mus musculus (Mouse)).